The primary structure comprises 339 residues: Ribosomal RNA small subunit methyltransferase C (339 aa).

It belongs to the methyltransferase superfamily. RsmC family. Monomer.

Its subcellular location is the cytoplasm. It catalyses the reaction guanosine(1207) in 16S rRNA + S-adenosyl-L-methionine = N(2)-methylguanosine(1207) in 16S rRNA + S-adenosyl-L-homocysteine + H(+). Its function is as follows. Specifically methylates the guanine in position 1207 of 16S rRNA in the 30S particle. This is Ribosomal RNA small subunit methyltransferase C from Aliivibrio fischeri (strain MJ11) (Vibrio fischeri).